The primary structure comprises 579 residues: Altered inheritance of mitochondria protein 9, mitochondrial (579 aa).

A mitochondrion-targeting transit peptide spans 1–36 (MQSWNSQSFLSSHFTMLRYACKRAVPRLNAASGLRF).

This sequence belongs to the AIM9 family.

The protein localises to the mitochondrion. In Yarrowia lipolytica (strain CLIB 122 / E 150) (Yeast), this protein is Altered inheritance of mitochondria protein 9, mitochondrial (AIM9).